Reading from the N-terminus, the 60-residue chain is Putative transcriptional regulator XtpA (60 aa).

Its function is as follows. Controls the expression of small non-coding RNA GcvB, which represses the expression of many amino acid transporter proteins and uptake of aminoglycoside antibiotics in cells. Might be a transcriptional activator. An RNA (xtr) with a tRNA-like fold possibly derived from tRNA-Arg(UCG) is encoded entirely within the protein; xtr does not have the sequence corresponding to tRNA anticodon or variable arms. 10 synonymous codon changes in the xtr region of xtpA have the same phenotype as a deletion mutation, suggesting the mRNA secondary structure is important for function. The polypeptide is Putative transcriptional regulator XtpA (Escherichia coli (strain K12)).